A 534-amino-acid polypeptide reads, in one-letter code: CTP synthase (534 aa).

Residues 1–267 (MTKYIFVTGG…DQIVCDHLKL (267 aa)) are amidoligase domain. Residue S13 coordinates CTP. Position 13 (S13) interacts with UTP. 14–19 (SIGKGI) is a binding site for ATP. Y54 contacts L-glutamine. Position 71 (D71) interacts with ATP. Mg(2+) is bound by residues D71 and E141. Residues 148–150 (DIE), 188–193 (KTKPTQ), and K224 contribute to the CTP site. Residues 188–193 (KTKPTQ) and K224 each bind UTP. The 243-residue stretch at 292 to 534 (KIALVGKYVE…FVTAAVENMK (243 aa)) folds into the Glutamine amidotransferase type-1 domain. An L-glutamine-binding site is contributed by G354. C381 functions as the Nucleophile; for glutamine hydrolysis in the catalytic mechanism. L-glutamine-binding positions include 382-385 (LGMQ), E405, and R463. Active-site residues include H508 and E510.

It belongs to the CTP synthase family. In terms of assembly, homotetramer.

It carries out the reaction UTP + L-glutamine + ATP + H2O = CTP + L-glutamate + ADP + phosphate + 2 H(+). The enzyme catalyses L-glutamine + H2O = L-glutamate + NH4(+). It catalyses the reaction UTP + NH4(+) + ATP = CTP + ADP + phosphate + 2 H(+). It participates in pyrimidine metabolism; CTP biosynthesis via de novo pathway; CTP from UDP: step 2/2. Allosterically activated by GTP, when glutamine is the substrate; GTP has no effect on the reaction when ammonia is the substrate. The allosteric effector GTP functions by stabilizing the protein conformation that binds the tetrahedral intermediate(s) formed during glutamine hydrolysis. Inhibited by the product CTP, via allosteric rather than competitive inhibition. Catalyzes the ATP-dependent amination of UTP to CTP with either L-glutamine or ammonia as the source of nitrogen. Regulates intracellular CTP levels through interactions with the four ribonucleotide triphosphates. This chain is CTP synthase, found in Streptococcus agalactiae serotype V (strain ATCC BAA-611 / 2603 V/R).